A 172-amino-acid polypeptide reads, in one-letter code: 3-hydroxydecanoyl-[acyl-carrier-protein] dehydratase (172 aa).

H71 is a catalytic residue.

This sequence belongs to the thioester dehydratase family. FabA subfamily. In terms of assembly, homodimer.

The protein localises to the cytoplasm. The enzyme catalyses a (3R)-hydroxyacyl-[ACP] = a (2E)-enoyl-[ACP] + H2O. It catalyses the reaction (3R)-hydroxydecanoyl-[ACP] = (2E)-decenoyl-[ACP] + H2O. It carries out the reaction (2E)-decenoyl-[ACP] = (3Z)-decenoyl-[ACP]. The protein operates within lipid metabolism; fatty acid biosynthesis. Necessary for the introduction of cis unsaturation into fatty acids. Catalyzes the dehydration of (3R)-3-hydroxydecanoyl-ACP to E-(2)-decenoyl-ACP and then its isomerization to Z-(3)-decenoyl-ACP. Can catalyze the dehydratase reaction for beta-hydroxyacyl-ACPs with saturated chain lengths up to 16:0, being most active on intermediate chain length. This chain is 3-hydroxydecanoyl-[acyl-carrier-protein] dehydratase, found in Blochmanniella floridana.